An 819-amino-acid polypeptide reads, in one-letter code: Leucine--tRNA ligase (819 aa).

The 'HIGH' region signature appears at 42–53 (PYPSGAKLHIGH). The 'KMSKS' region motif lies at 578–582 (RMSKS). An ATP-binding site is contributed by K581.

Belongs to the class-I aminoacyl-tRNA synthetase family.

Its subcellular location is the cytoplasm. It catalyses the reaction tRNA(Leu) + L-leucine + ATP = L-leucyl-tRNA(Leu) + AMP + diphosphate. The protein is Leucine--tRNA ligase of Caldanaerobacter subterraneus subsp. tengcongensis (strain DSM 15242 / JCM 11007 / NBRC 100824 / MB4) (Thermoanaerobacter tengcongensis).